We begin with the raw amino-acid sequence, 315 residues long: Small ribosomal subunit biogenesis GTPase RsgA (315 aa).

The region spanning 82 to 246 (DQFKSKVLAA…LIDSPGFQEF (165 aa)) is the CP-type G domain. GTP contacts are provided by residues 130–133 (NKID) and 184–192 (GQSGMGKSS). Zn(2+) contacts are provided by C270, C275, H277, and C283.

The protein belongs to the TRAFAC class YlqF/YawG GTPase family. RsgA subfamily. In terms of assembly, monomer. Associates with 30S ribosomal subunit, binds 16S rRNA. Zn(2+) is required as a cofactor.

The protein resides in the cytoplasm. Its function is as follows. One of several proteins that assist in the late maturation steps of the functional core of the 30S ribosomal subunit. Helps release RbfA from mature subunits. May play a role in the assembly of ribosomal proteins into the subunit. Circularly permuted GTPase that catalyzes slow GTP hydrolysis, GTPase activity is stimulated by the 30S ribosomal subunit. This Ralstonia pickettii (strain 12J) protein is Small ribosomal subunit biogenesis GTPase RsgA.